A 249-amino-acid polypeptide reads, in one-letter code: Triosephosphate isomerase (249 aa).

2 residues coordinate substrate: N12 and K14. K14 carries the post-translational modification N6-acetyllysine. Position 68 is a 3'-nitrotyrosine (Y68). Residues S80 and S106 each carry the phosphoserine modification. K142 participates in a covalent cross-link: Glycyl lysine isopeptide (Lys-Gly) (interchain with G-Cter in SUMO1). K149 carries the N6-succinyllysine modification. K156 carries the post-translational modification N6-acetyllysine; alternate. The residue at position 156 (K156) is an N6-succinyllysine; alternate. At S159 the chain carries Phosphoserine. The active-site Proton acceptor is E166. T173 bears the Phosphothreonine mark. Residue K194 is modified to N6-acetyllysine; alternate. Residue K194 is modified to N6-succinyllysine; alternate. K194 carries the N6-methyllysine; alternate modification. Phosphoserine is present on S198. Y209 carries the 3'-nitrotyrosine modification. Residue S212 is modified to Phosphoserine. Residue T214 is modified to Phosphothreonine. S223 bears the Phosphoserine mark. The residue at position 238 (K238) is an N6-acetyllysine.

Belongs to the triosephosphate isomerase family. As to quaternary structure, homodimer.

It localises to the cytoplasm. The enzyme catalyses D-glyceraldehyde 3-phosphate = dihydroxyacetone phosphate. It carries out the reaction dihydroxyacetone phosphate = methylglyoxal + phosphate. Its pathway is carbohydrate biosynthesis; gluconeogenesis. It functions in the pathway carbohydrate degradation; glycolysis; D-glyceraldehyde 3-phosphate from glycerone phosphate: step 1/1. In terms of biological role, triosephosphate isomerase is an extremely efficient metabolic enzyme that catalyzes the interconversion between dihydroxyacetone phosphate (DHAP) and D-glyceraldehyde-3-phosphate (G3P) in glycolysis and gluconeogenesis. Its function is as follows. It is also responsible for the non-negligible production of methylglyoxal a reactive cytotoxic side-product that modifies and can alter proteins, DNA and lipids. In Mesocricetus auratus (Golden hamster), this protein is Triosephosphate isomerase.